Reading from the N-terminus, the 596-residue chain is Fructan 1-exohydrolase w3 (596 aa).

The first 20 residues, 1–20 (MAQAWAFLLPVLVLGSYVTS), serve as a signal peptide directing secretion. Residue Asp-75 is part of the active site. Residues Asn-168, Asn-236, and Asn-248 are each glycosylated (N-linked (GlcNAc...) asparagine). The cysteines at positions 446 and 492 are disulfide-linked.

Belongs to the glycosyl hydrolase 32 family. As to expression, expressed in the stem, particularly the penultimate internode. Little expression is detected in roots and in the peduncle part of the stem.

The enzyme catalyses Hydrolysis of terminal, non-reducing (2-&gt;1)-linked beta-D-fructofuranose residues in fructans.. Its activity is regulated as follows. Inhibited by sucrose. Its function is as follows. Hydrolyzes inulin-type beta-(2,1)-fructans and beta-(2,1)-linkages in branched fructans. Has low activity against beta-(2,6)-linked fructans. May play a role as a beta-(2,1)-trimmer during graminan biosynthesis. This chain is Fructan 1-exohydrolase w3, found in Triticum aestivum (Wheat).